The sequence spans 403 residues: Cytochrome P450-SU2 (403 aa).

The interval 1–24 is disordered; sequence MTTAERTAPPDALTVPASRAPGCP. Cys352 lines the heme pocket.

This sequence belongs to the cytochrome P450 family. Heme is required as a cofactor.

Functionally, metabolism of a number of sulfonylurea herbicides. The chain is Cytochrome P450-SU2 (cyp105B1) from Streptomyces griseolus.